We begin with the raw amino-acid sequence, 404 residues long: S-adenosylmethionine synthase (404 aa).

His18 lines the ATP pocket. Asp20 lines the Mg(2+) pocket. K(+) is bound at residue Glu46. Glu59 and Gln102 together coordinate L-methionine. The segment at 102–112 is flexible loop; sequence QSPEIAQGVDH. Residues 178–180, 249–250, Asp258, 264–265, Ala281, and Lys285 contribute to the ATP site; these read DGK, KF, and RK. Asp258 contributes to the L-methionine binding site. Residue Lys289 coordinates L-methionine.

Belongs to the AdoMet synthase family. As to quaternary structure, homotetramer; dimer of dimers. Requires Mg(2+) as cofactor. K(+) serves as cofactor.

Its subcellular location is the cytoplasm. It carries out the reaction L-methionine + ATP + H2O = S-adenosyl-L-methionine + phosphate + diphosphate. It functions in the pathway amino-acid biosynthesis; S-adenosyl-L-methionine biosynthesis; S-adenosyl-L-methionine from L-methionine: step 1/1. Its function is as follows. Catalyzes the formation of S-adenosylmethionine (AdoMet) from methionine and ATP. The overall synthetic reaction is composed of two sequential steps, AdoMet formation and the subsequent tripolyphosphate hydrolysis which occurs prior to release of AdoMet from the enzyme. This is S-adenosylmethionine synthase from Rhodococcus opacus (strain B4).